Reading from the N-terminus, the 714-residue chain is Probable metal-nicotianamine transporter YSL5 (714 aa).

Positions 17-44 (HELQETGFSPETEKVKNKNFEEDEEEED) are disordered. Basic and acidic residues predominate over residues 27-36 (ETEKVKNKNF). 13 helical membrane passes run 67–87 (AFVV…KLNL), 90–110 (GIIP…VKTW), 135–155 (CVVA…LFGM), 175–195 (LGWI…SVVP), 236–256 (VLGK…FFTG), 295–315 (IINI…WPLI), 340–360 (VFIA…KVLS), 413–433 (IPTW…TAIL), 445–465 (ILVI…GAGL), 477–497 (LAIF…LAGL), 531–551 (FVSQ…VFWL), 593–613 (LVLC…KDSL), and 631–651 (FFLG…LFIW).

This sequence belongs to the YSL (TC 2.A.67.2) family.

The protein resides in the membrane. In terms of biological role, may be involved in the transport of nicotianamine-chelated metals. The protein is Probable metal-nicotianamine transporter YSL5 (YSL5) of Arabidopsis thaliana (Mouse-ear cress).